The chain runs to 506 residues: Galactose/methyl galactoside import ATP-binding protein MglA (506 aa).

2 consecutive ABC transporter domains span residues L14–S249 and N259–L506. Position 46-53 (G46–S53) interacts with ATP.

The protein belongs to the ABC transporter superfamily. Galactose/methyl galactoside importer (TC 3.A.1.2.3) family. The complex is composed of one ATP-binding protein (MglA), two transmembrane proteins (MglC) and a solute-binding protein (MglB).

It localises to the cell inner membrane. It carries out the reaction D-galactose(out) + ATP + H2O = D-galactose(in) + ADP + phosphate + H(+). It catalyses the reaction methyl beta-D-galactoside(out) + ATP + H2O = methyl beta-D-galactoside(in) + ADP + phosphate + H(+). With respect to regulation, stimulated 3-fold by galactose and inhibited by vanadate, N-ethylmaleimide, and 5-methoxyindole-2-carboxylic acid. In terms of biological role, part of the ABC transporter complex MglABC involved in galactose/methyl galactoside import. Responsible for energy coupling to the transport system. This is Galactose/methyl galactoside import ATP-binding protein MglA from Salmonella typhimurium (strain LT2 / SGSC1412 / ATCC 700720).